Consider the following 173-residue polypeptide: uncharacterized protein (173 aa).

One can recognise an N-acetyltransferase domain in the interval 2 to 171 (VTVREAKLED…PDLSALKTLL (170 aa)).

It belongs to the acetyltransferase family.

This is an uncharacterized protein from Bacillus subtilis (strain 168).